The chain runs to 129 residues: Follitropin subunit beta (129 aa).

An N-terminal signal peptide occupies residues 1–20; it reads MKTAQFYVLFFCWKAIWCNG. 6 cysteine pairs are disulfide-bonded: Cys-21/Cys-69, Cys-35/Cys-84, Cys-38/Cys-122, Cys-46/Cys-100, Cys-50/Cys-102, and Cys-105/Cys-112. Asn-25 and Asn-42 each carry an N-linked (GlcNAc...) asparagine glycan.

It belongs to the glycoprotein hormones subunit beta family. In terms of assembly, heterodimer. The active follitropin is a heterodimer composed of an alpha chain/CGA shared with other hormones and a unique beta chain/FSHB shown here.

The protein localises to the secreted. In terms of biological role, together with the alpha chain CGA constitutes follitropin, the follicle-stimulating hormone, and provides its biological specificity to the hormone heterodimer. Binds FSHR, a G protein-coupled receptor, on target cells to activate downstream signaling pathways. Follitropin is involved in follicle development and spermatogenesis in reproductive organs. This is Follitropin subunit beta (FSHB) from Trichosurus vulpecula (Brush-tailed possum).